Here is a 196-residue protein sequence, read N- to C-terminus: UPF0215 protein MM_1007 (196 aa).

It belongs to the UPF0215 family.

In Methanosarcina mazei (strain ATCC BAA-159 / DSM 3647 / Goe1 / Go1 / JCM 11833 / OCM 88) (Methanosarcina frisia), this protein is UPF0215 protein MM_1007.